Reading from the N-terminus, the 1170-residue chain is NPC intracellular sterol transporter 1-related protein 1 (1170 aa).

The signal sequence occupies residues Met-1 to Gly-19. Cystine bridges form between Cys-23/Cys-75, Cys-29/Cys-41, Cys-64/Cys-110, Cys-76/Cys-114, Cys-98/Cys-230, Cys-101/Cys-156, Cys-223/Cys-235, and Cys-232/Cys-239. 3 N-linked (GlcNAc...) asparagine glycosylation sites follow: Asn-123, Asn-145, and Asn-178. The helical transmembrane segment at Leu-260–Cys-280 threads the bilayer. N-linked (GlcNAc...) asparagine glycosylation occurs at Asn-314. Residues Ile-341 to Thr-361 traverse the membrane as a helical segment. Asn-401 carries N-linked (GlcNAc...) asparagine glycosylation. 2 disulfides stabilise this stretch: Cys-438–Cys-447 and Cys-473–Cys-480. N-linked (GlcNAc...) asparagine glycosylation occurs at Asn-513. A run of 6 helical transmembrane segments spans residues Asn-556–Leu-576, Leu-585–Phe-605, Ile-616–Ile-636, Ile-667–Pro-687, Val-698–Tyr-718, and Ile-752–Phe-772. The region spanning Asp-557 to Leu-717 is the SSD domain. 4 disulfide bridges follow: Cys-822–Cys-828, Cys-868–Cys-925, Cys-869–Cys-891, and Cys-879–Cys-888. 2 N-linked (GlcNAc...) asparagine glycosylation sites follow: Asn-900 and Asn-940. Helical transmembrane passes span Leu-1000–Leu-1020, Phe-1027–Leu-1047, Val-1054–Val-1074, Ile-1099–Ala-1119, and Met-1133–Leu-1153.

The protein belongs to the patched family.

It localises to the vacuole membrane. In terms of biological role, involved in sphingolipid trafficking. May recycle sphingolipids between cellular membranous compartments. The protein is NPC intracellular sterol transporter 1-related protein 1 of Saccharomyces cerevisiae (strain ATCC 204508 / S288c) (Baker's yeast).